Here is a 243-residue protein sequence, read N- to C-terminus: Venom nerve growth factor (243 aa).

An N-terminal signal peptide occupies residues 1–18 (MSMLCYTLIIVFLIGIWA). Residues 19–125 (APKSEDNVPL…TLNRNIRAKR (107 aa)) constitute a propeptide that is removed on maturation. Residues 47–66 (GLKTSRNTDQRHPAPKKAED) are compositionally biased toward basic and acidic residues. The interval 47-69 (GLKTSRNTDQRHPAPKKAEDQEL) is disordered. 3 disulfide bridges follow: Cys-139-Cys-204, Cys-182-Cys-232, and Cys-192-Cys-234. An N-linked (GlcNAc...) asparagine glycan is attached at Asn-148.

The protein belongs to the NGF-beta family. In terms of assembly, homodimer; non-covalently linked. Expressed by the venom gland.

The protein resides in the secreted. Nerve growth factor is important for the development and maintenance of the sympathetic and sensory nervous systems. It stimulates division and differentiation of sympathetic and embryonic sensory neurons as well as basal forebrain cholinergic neurons in the brain. Its relevance in the snake venom is not clear. However, it has been shown to inhibit metalloproteinase-dependent proteolysis of platelet glycoprotein Ib alpha, suggesting a metalloproteinase inhibition to prevent metalloprotease autodigestion and/or protection against prey proteases. Binds a lipid between the two protein chains in the homodimer. The lipid-bound form promotes histamine relase from mouse mast cells, contrary to the lipid-free form. The chain is Venom nerve growth factor from Oxyuranus scutellatus scutellatus (Australian taipan).